The primary structure comprises 28 residues: Flagellar filament 34 kDa core protein (28 aa).

Belongs to the bacterial flagellin family. In terms of assembly, the flagellum consists of an outer layer composed of repeating units of FlaA around a core that contains several antigenically related polypeptides.

It localises to the periplasmic flagellum. The protein localises to the periplasm. Functionally, component of the core of the flagella. The polypeptide is Flagellar filament 34 kDa core protein (Treponema phagedenis).